The primary structure comprises 238 residues: NAD(P)H-hydrate epimerase (238 aa).

Residues 10–225 form the YjeF N-terminal domain; that stretch reads AIKVDQILFN…ALQRQYELNL (216 aa). 68–72 is a (6S)-NADPHX binding site; that stretch reads NNGGD. The K(+) site is built by N69 and D133. (6S)-NADPHX-binding positions include 137–143 and D166; that span reads GFSFKPP. S169 provides a ligand contact to K(+).

Belongs to the NnrE/AIBP family. K(+) serves as cofactor.

The catalysed reaction is (6R)-NADHX = (6S)-NADHX. It catalyses the reaction (6R)-NADPHX = (6S)-NADPHX. Functionally, catalyzes the epimerization of the S- and R-forms of NAD(P)HX, a damaged form of NAD(P)H that is a result of enzymatic or heat-dependent hydration. This is a prerequisite for the S-specific NAD(P)H-hydrate dehydratase to allow the repair of both epimers of NAD(P)HX. The chain is NAD(P)H-hydrate epimerase from Drosophila willistoni (Fruit fly).